We begin with the raw amino-acid sequence, 396 residues long: Tryptophan synthase beta chain (396 aa).

K88 carries the post-translational modification N6-(pyridoxal phosphate)lysine.

Belongs to the TrpB family. In terms of assembly, tetramer of two alpha and two beta chains. Pyridoxal 5'-phosphate serves as cofactor.

The catalysed reaction is (1S,2R)-1-C-(indol-3-yl)glycerol 3-phosphate + L-serine = D-glyceraldehyde 3-phosphate + L-tryptophan + H2O. It functions in the pathway amino-acid biosynthesis; L-tryptophan biosynthesis; L-tryptophan from chorismate: step 5/5. Its function is as follows. The beta subunit is responsible for the synthesis of L-tryptophan from indole and L-serine. The chain is Tryptophan synthase beta chain from Shewanella putrefaciens (strain CN-32 / ATCC BAA-453).